The sequence spans 636 residues: Chaperone protein HtpG (636 aa).

Positions 1-329 (MSKEHGAAAE…TEDLPLNISR (329 aa)) are a; substrate-binding. The tract at residues 330 to 550 (ETLQENALIA…DGGMTASMEK (221 aa)) is b. The tract at residues 551–636 (LMRVMNKDES…TGWYAEVRKL (86 aa)) is c.

Belongs to the heat shock protein 90 family. Homodimer.

Its subcellular location is the cytoplasm. Functionally, molecular chaperone. Has ATPase activity. This is Chaperone protein HtpG from Oleidesulfovibrio alaskensis (strain ATCC BAA-1058 / DSM 17464 / G20) (Desulfovibrio alaskensis).